Consider the following 313-residue polypeptide: Foldase protein PrsA (313 aa).

The signal sequence occupies residues 1–20 (MKKKLLAGAITLLSVATLAA). Cysteine 21 carries N-palmitoyl cysteine lipidation. Residue cysteine 21 is the site of S-diacylglycerol cysteine attachment. Residues 143-241 (TPDVTAQIIR…SQYYIVKLTK (99 aa)) form the PpiC domain.

Belongs to the PrsA family.

Its subcellular location is the cell membrane. It catalyses the reaction [protein]-peptidylproline (omega=180) = [protein]-peptidylproline (omega=0). Plays a major role in protein secretion by helping the post-translocational extracellular folding of several secreted proteins. This Streptococcus pneumoniae (strain ATCC BAA-255 / R6) protein is Foldase protein PrsA.